We begin with the raw amino-acid sequence, 156 residues long: Small ribosomal subunit protein uS7 (156 aa).

The protein belongs to the universal ribosomal protein uS7 family. Part of the 30S ribosomal subunit. Contacts proteins S9 and S11.

In terms of biological role, one of the primary rRNA binding proteins, it binds directly to 16S rRNA where it nucleates assembly of the head domain of the 30S subunit. Is located at the subunit interface close to the decoding center, probably blocks exit of the E-site tRNA. The chain is Small ribosomal subunit protein uS7 from Shewanella piezotolerans (strain WP3 / JCM 13877).